A 133-amino-acid chain; its full sequence is Male-specific protein scotti (133 aa).

Positions 11–57 (FPSNGLGNNNNDPNQQRGERPRQPHPDLGWILDAPNEPPRNRNPLLY) are disordered. The span at 14-24 (NGLGNNNNDPN) shows a compositional bias: low complexity. An N-linked (GlcNAc...) asparagine glycan is attached at asparagine 83.

This sequence belongs to the male-specific scotti family.

Post-meiotically transcribed gene that has a role in late spermiogenesis; required for actin cone progression during spermatid individualization. This chain is Male-specific protein scotti, found in Drosophila persimilis (Fruit fly).